The chain runs to 1344 residues: Period circadian protein homolog 2 (1344 aa).

Disordered regions lie at residues 1-21 (MDCI…PEQQ) and 42-112 (EYSG…NGKD). Residues 10–21 (YSSTEEQNPEQQ) show a composition bias toward polar residues. Positions 78-89 (SSGSSGNDFSGN) are enriched in low complexity. Residues 99–111 (HDSHGHESDENGK) show a composition bias toward basic and acidic residues. Positions 161–170 (LLKTLQELKA) match the Nuclear export signal 1 motif. The region spanning 231 to 298 (ITSEYIMKNA…FYTSTTPYRL (68 aa)) is the PAS 1 domain. Positions 358-362 (LCCVL) match the LXXLL motif. The PAS 2 domain occupies 371-437 (YEAPRIPPDK…MLAIHKKILQ (67 aa)). Positions 445-488 (YSPIRFCTRNGDYITMDTSWSSFINPWSRKVSFIIGRHKVRTGP) constitute a PAC domain. A Nuclear export signal 2 motif is present at residues 512-521 (ITEQIYRLLL). Disordered regions lie at residues 531–609 (GYGS…QVKD), 661–686 (AKRK…NAIQ), 823–894 (LQDK…WSPS), 1038–1065 (TETR…PLFQ), and 1107–1126 (TTDA…MDAQ). Over residues 549-559 (SSSDSTGNNND) the composition is skewed to low complexity. 2 stretches are compositionally biased toward basic and acidic residues: residues 560–573 (DTQK…DARK) and 583–597 (TENK…EPSA). Residues 667–684 (PSSSVNSSVHEQKASVNA) are compositionally biased toward polar residues. A compositionally biased stretch (basic and acidic residues) spans 825–836 (DKPKGRPGERGG). The Nuclear localization signal motif lies at 851–865 (KKSGKNRKSKRIKPQ). Over residues 852 to 862 (KSGKNRKSKRI) the composition is skewed to basic residues. Composition is skewed to polar residues over residues 865–875 (QESSDSTTSGT), 885–894 (GLNTTAWSPS), and 1045–1059 (SRSC…QDQA). The LXXLL motif lies at 1138–1142 (LDILL). Residues 1149–1172 (GTGSASSGSGVSAAAESLGSGSNG) are compositionally biased toward low complexity. The segment at 1149–1197 (GTGSASSGSGVSAAAESLGSGSNGCDMSGSRTGSSETSHTSKYFGSIDS) is disordered. Polar residues predominate over residues 1177 to 1197 (GSRTGSSETSHTSKYFGSIDS). The interval 1244–1344 (SRDLETVLKE…PLSQVNEEQT (101 aa)) is CRY binding domain.

In terms of assembly, component of the circadian clock oscillator which includes the CRY proteins, CLOCK or NPAS2, BMAL1 or BMAL2, CSNK1E, and the PER proteins. Interacts directly with PER3, and through a C-terminal domain, with CRY1 and CRY2.

It is found in the nucleus. The protein resides in the cytoplasm. Transcriptional repressor which forms a core component of the circadian clock. The circadian clock, an internal time-keeping system, regulates various physiological processes through the generation of approximately 24 hour circadian rhythms in gene expression, which are translated into rhythms in metabolism and behavior. It is derived from the Latin roots 'circa' (about) and 'diem' (day) and acts as an important regulator of a wide array of physiological functions including metabolism, sleep, body temperature, blood pressure, endocrine, immune, cardiovascular, and renal function. Consists of two major components: the central clock, residing in the suprachiasmatic nucleus (SCN) of the brain, and the peripheral clocks that are present in nearly every tissue and organ system. Both the central and peripheral clocks can be reset by environmental cues, also known as Zeitgebers (German for 'timegivers'). The predominant Zeitgeber for the central clock is light, which is sensed by retina and signals directly to the SCN. The central clock entrains the peripheral clocks through neuronal and hormonal signals, body temperature and feeding-related cues, aligning all clocks with the external light/dark cycle. Circadian rhythms allow an organism to achieve temporal homeostasis with its environment at the molecular level by regulating gene expression to create a peak of protein expression once every 24 hours to control when a particular physiological process is most active with respect to the solar day. Transcription and translation of core clock components (CLOCK, NPAS2, BMAL1, BMAL2, PER1, PER2, PER3, CRY1 and CRY2) plays a critical role in rhythm generation, whereas delays imposed by post-translational modifications (PTMs) are important for determining the period (tau) of the rhythms (tau refers to the period of a rhythm and is the length, in time, of one complete cycle). A diurnal rhythm is synchronized with the day/night cycle, while the ultradian and infradian rhythms have a period shorter and longer than 24 hours, respectively. Disruptions in the circadian rhythms contribute to the pathology of cardiovascular diseases, cancer, metabolic syndrome and aging. A transcription/translation feedback loop (TTFL) forms the core of the molecular circadian clock mechanism. Transcription factors, CLOCK or NPAS2 and BMAL1 or BMAL2, form the positive limb of the feedback loop, act in the form of a heterodimer and activate the transcription of core clock genes and clock-controlled genes (involved in key metabolic processes), harboring E-box elements (5'-CACGTG-3') within their promoters. The core clock genes: PER1/2/3 and CRY1/2 which are transcriptional repressors form the negative limb of the feedback loop and interact with the CLOCK|NPAS2-BMAL1|BMAL2 heterodimer inhibiting its activity and thereby negatively regulating their own expression. This heterodimer also activates nuclear receptors NR1D1/2 and RORA/B/G, which form a second feedback loop and which activate and repress BMAL1 transcription, respectively. PER1 and PER2 proteins transport CRY1 and CRY2 into the nucleus with appropriate circadian timing, but also contribute directly to repression of clock-controlled target genes through interaction with several classes of RNA-binding proteins, helicases and others transcriptional repressors. PER appears to regulate circadian control of transcription by at least three different modes. First, interacts directly with the CLOCK-BMAL1 at the tail end of the nascent transcript peak to recruit complexes containing the SIN3-HDAC that remodel chromatin to repress transcription. Second, brings H3K9 methyltransferases such as SUV39H1 and SUV39H2 to the E-box elements of the circadian target genes, like PER2 itself or PER1. The recruitment of each repressive modifier to the DNA seems to be very precisely temporally orchestrated by the large PER complex, the deacetylases acting before than the methyltransferases. Additionally, large PER complexes are also recruited to the target genes 3' termination site through interactions with RNA-binding proteins and helicases that may play a role in transcription termination to regulate transcription independently of CLOCK-BMAL1 interactions. The polypeptide is Period circadian protein homolog 2 (PER2) (Gallus gallus (Chicken)).